Consider the following 471-residue polypeptide: Pneumolysin (471 aa).

Beta stranded transmembrane passes span 158–171 (MEQL…DFEK), 178–187 (IDFNSVHSGE), 256–265 (SDEVEAAFEA), and 273–285 (APQT…LDNT). Residues 427–437 (ECTGLAWEWWR) carry the Conserved undecapeptide motif. Positions 459–460 (TL) match the Cholesterol binding motif.

It belongs to the cholesterol-dependent cytolysin family. In terms of assembly, homooligomeric pore complex of 35 to 50 subunits; when inserted in the host membrane. Has a slightly altered apparent molecular weight in a secA2 deletion mutant, but no post-translational modifications have been found.

The protein resides in the secreted. It localises to the cell wall. Its subcellular location is the host cell membrane. In terms of biological role, a cholesterol-dependent toxin that causes cytolysis by forming pores in cholesterol containing host membranes. After binding to target membranes, the protein undergoes a major conformation change, leading to its insertion in the host membrane and formation of an oligomeric pore complex. Cholesterol is required for binding to host membranes, membrane insertion and pore formation; cholesterol binding is mediated by a Thr-Leu pair in the C-terminus. Can be reversibly inactivated by oxidation. This Streptococcus pneumoniae serotype 4 (strain ATCC BAA-334 / TIGR4) protein is Pneumolysin (ply).